The primary structure comprises 337 residues: Tetraacyldisaccharide 4'-kinase (337 aa).

58-65 (TVGGSGKT) is a binding site for ATP.

It belongs to the LpxK family.

It catalyses the reaction a lipid A disaccharide + ATP = a lipid IVA + ADP + H(+). Its pathway is glycolipid biosynthesis; lipid IV(A) biosynthesis; lipid IV(A) from (3R)-3-hydroxytetradecanoyl-[acyl-carrier-protein] and UDP-N-acetyl-alpha-D-glucosamine: step 6/6. In terms of biological role, transfers the gamma-phosphate of ATP to the 4'-position of a tetraacyldisaccharide 1-phosphate intermediate (termed DS-1-P) to form tetraacyldisaccharide 1,4'-bis-phosphate (lipid IVA). The polypeptide is Tetraacyldisaccharide 4'-kinase (Shewanella putrefaciens (strain CN-32 / ATCC BAA-453)).